Here is a 572-residue protein sequence, read N- to C-terminus: DNA polymerase (572 aa).

The interval 1–222 is 3'-5' exonuclease and strand displacement activities; the sequence is MSRKMFSCDF…LPMDKEIRKA (222 aa). An interaction with the primer terminal protein region spans residues 56–66; that stretch reads YFHNLKFDGAF. Mg(2+) is bound by residues aspartate 142 and aspartate 166. Residues 223–226 are DNA-binding; Involved in the formation of a stable complex between TP and phi29 DNA polymerase; the sequence is YRGG. Residues 227-572 form an initiation, polymerization and pyrophosphorolytic activities region; sequence FTWLNDKYKE…VLVDSVFTIK (346 aa). The Mg(2+) site is built by aspartate 246 and valine 247. 5-methyl-UTP contacts are provided by tyrosine 251, lysine 368, and lysine 380. Positions 453 and 455 each coordinate Mg(2+). A 5-methyl-UTP-binding site is contributed by aspartate 455.

It belongs to the DNA polymerase type-B family. In terms of assembly, interacts with the primer terminal protein; this interaction allows the initiation of TP-primed DNA replication at both viral DNA ends. Interacts with DNA. Mg(2+) serves as cofactor.

It carries out the reaction DNA(n) + a 2'-deoxyribonucleoside 5'-triphosphate = DNA(n+1) + diphosphate. Its function is as follows. Polymerase responsible for protein-primed viral DNA replication by strand displacement with high processivity and fidelity. To start replication, the DNA polymerase forms a heterodimer with a free primer terminal protein (TP), recognizes the replication origins at both 5' ends of the linear chromosome, and initiates replication using as primer the OH-group of Ser-232 of the TP. This polymerase possesses three enzymatic activities: DNA synthesis (polymerase), primer terminal protein (TP) deoxynucleotidylation, which is the formation of a covalent linkage (phosphoester) between the hydroxyl group of a specific serine residue in TP and 5'-dAMP, a reaction directed by the third T at the 3' end, and 3' to 5' exonuclease activity. Exonuclease activity has a proofreading purpose. Since the polymerase initiates the replication on the third thymine, the TP-dAMP initiation product translocates backwards to recover the template information of the 2 terminal nucleotide (sliding back-mechanism). This chain is DNA polymerase, found in Bacillus phage Nf (Bacteriophage Nf).